The primary structure comprises 169 residues: S-ribosylhomocysteine lyase (169 aa).

Fe cation is bound by residues His54, His58, and Cys128.

This sequence belongs to the LuxS family. As to quaternary structure, homodimer. Fe cation is required as a cofactor.

It carries out the reaction S-(5-deoxy-D-ribos-5-yl)-L-homocysteine = (S)-4,5-dihydroxypentane-2,3-dione + L-homocysteine. Its function is as follows. Involved in the synthesis of autoinducer 2 (AI-2) which is secreted by bacteria and is used to communicate both the cell density and the metabolic potential of the environment. The regulation of gene expression in response to changes in cell density is called quorum sensing. Catalyzes the transformation of S-ribosylhomocysteine (RHC) to homocysteine (HC) and 4,5-dihydroxy-2,3-pentadione (DPD). This chain is S-ribosylhomocysteine lyase, found in Sulfurovum sp. (strain NBC37-1).